Reading from the N-terminus, the 45-residue chain is Large ribosomal subunit protein bL34 (45 aa).

A compositionally biased stretch (basic and acidic residues) spans 1–10 (MTKRTLEGTN). Residues 1-27 (MTKRTLEGTNRKRKRTSGFRARMRSAT) form a disordered region. The span at 11–23 (RKRKRTSGFRARM) shows a compositional bias: basic residues.

This sequence belongs to the bacterial ribosomal protein bL34 family.

The protein is Large ribosomal subunit protein bL34 of Synechococcus elongatus (strain ATCC 33912 / PCC 7942 / FACHB-805) (Anacystis nidulans R2).